Consider the following 622-residue polypeptide: Elongation factor 4 (622 aa).

The tr-type G domain occupies 17-198 (ELLRNFCIIA…QIVRQIPAPV (182 aa)). Residues 29–34 (DHGKST) and 145–148 (NKID) each bind GTP.

This sequence belongs to the TRAFAC class translation factor GTPase superfamily. Classic translation factor GTPase family. LepA subfamily.

The protein localises to the cell membrane. It catalyses the reaction GTP + H2O = GDP + phosphate + H(+). Functionally, required for accurate and efficient protein synthesis under certain stress conditions. May act as a fidelity factor of the translation reaction, by catalyzing a one-codon backward translocation of tRNAs on improperly translocated ribosomes. Back-translocation proceeds from a post-translocation (POST) complex to a pre-translocation (PRE) complex, thus giving elongation factor G a second chance to translocate the tRNAs correctly. Binds to ribosomes in a GTP-dependent manner. This Kineococcus radiotolerans (strain ATCC BAA-149 / DSM 14245 / SRS30216) protein is Elongation factor 4.